The chain runs to 213 residues: Charged multivesicular body protein 2b (213 aa).

At alanine 2 the chain carries N-acetylalanine. Positions 25 to 55 form a coiled coil; sequence QRAIIRDRAALEKQEKQLELEIKKMAKIGNK. Over residues 179–194 the composition is skewed to low complexity; the sequence is AKAPSAARSLPSASTS. A disordered region spans residues 179–199; the sequence is AKAPSAARSLPSASTSKATIS. Serine 199 is modified (phosphoserine). The short motif at 201–211 is the MIT-interacting motif element; sequence EEIERQLKALG.

The protein belongs to the SNF7 family. As to quaternary structure, probable core component of the endosomal sorting required for transport complex III (ESCRT-III). ESCRT-III components are thought to multimerize to form a flat lattice on the perimeter membrane of the endosome. Several assembly forms of ESCRT-III may exist that interact and act sequentially. Interacts with CHMP2A. Interacts with VPS4A. Interacts with VPS4B; the interaction is direct. As to expression, widely expressed. Expressed in brain, heart, skeletal muscle, spleen, kidney, liver, small intestine, pancreas, lung, placenta and leukocytes. In brain, it is expressed in cerebellum, cerebral cortex, medulla, spinal cord, occipital lobe, frontal lobe, temporal lobe and putamen.

It localises to the cytoplasm. The protein resides in the cytosol. It is found in the late endosome membrane. Probable core component of the endosomal sorting required for transport complex III (ESCRT-III) which is involved in multivesicular bodies (MVBs) formation and sorting of endosomal cargo proteins into MVBs. MVBs contain intraluminal vesicles (ILVs) that are generated by invagination and scission from the limiting membrane of the endosome and mostly are delivered to lysosomes enabling degradation of membrane proteins, such as stimulated growth factor receptors, lysosomal enzymes and lipids. The MVB pathway appears to require the sequential function of ESCRT-O, -I,-II and -III complexes. ESCRT-III proteins mostly dissociate from the invaginating membrane before the ILV is released. The ESCRT machinery also functions in topologically equivalent membrane fission events, such as the terminal stages of cytokinesis and the budding of enveloped viruses (HIV-1 and other lentiviruses). ESCRT-III proteins are believed to mediate the necessary vesicle extrusion and/or membrane fission activities, possibly in conjunction with the AAA ATPase VPS4. The protein is Charged multivesicular body protein 2b (CHMP2B) of Homo sapiens (Human).